Consider the following 122-residue polypeptide: Large ribosomal subunit protein uL14c (122 aa).

Belongs to the universal ribosomal protein uL14 family. Part of the 50S ribosomal subunit.

The protein localises to the plastid. The protein resides in the chloroplast. Its function is as follows. Binds to 23S rRNA. This Gracilaria tenuistipitata var. liui (Red alga) protein is Large ribosomal subunit protein uL14c.